Reading from the N-terminus, the 105-residue chain is Small ribosomal subunit protein uS10 (105 aa).

The protein belongs to the universal ribosomal protein uS10 family. In terms of assembly, part of the 30S ribosomal subunit.

Functionally, involved in the binding of tRNA to the ribosomes. This chain is Small ribosomal subunit protein uS10, found in Maridesulfovibrio salexigens (strain ATCC 14822 / DSM 2638 / NCIMB 8403 / VKM B-1763) (Desulfovibrio salexigens).